The following is a 111-amino-acid chain: Cytochrome c (111 aa).

Serine 1 is subject to N-acetylserine. Positions 22, 25, and 26 each coordinate heme c. At lysine 80 the chain carries N6,N6,N6-trimethyllysine. Methionine 88 provides a ligand contact to heme c.

The protein belongs to the cytochrome c family. Binds 1 heme c group covalently per subunit.

The protein localises to the mitochondrion intermembrane space. Functionally, electron carrier protein. The oxidized form of the cytochrome c heme group can accept an electron from the heme group of the cytochrome c1 subunit of cytochrome reductase. Cytochrome c then transfers this electron to the cytochrome oxidase complex, the final protein carrier in the mitochondrial electron-transport chain. The polypeptide is Cytochrome c (Ulva intestinalis (Hollow green nori)).